The primary structure comprises 271 residues: Histone chaperone asf-1 (271 aa).

Positions 152–271 (KWDSEASAPP…PKQQGMAMAQ (120 aa)) are disordered. Acidic residues-rich tracts occupy residues 168-185 (PEAD…DELA) and 211-258 (IEED…EMEI).

This sequence belongs to the ASF1 family. As to quaternary structure, interacts with histone H3 and histone H4.

The protein resides in the nucleus. Its function is as follows. Histone chaperone that facilitates histone deposition and histone exchange and removal during nucleosome assembly and disassembly. This chain is Histone chaperone asf-1 (asf-1), found in Neurospora crassa (strain ATCC 24698 / 74-OR23-1A / CBS 708.71 / DSM 1257 / FGSC 987).